The following is a 233-amino-acid chain: Large ribosomal subunit protein uL1 (233 aa).

This sequence belongs to the universal ribosomal protein uL1 family. In terms of assembly, part of the 50S ribosomal subunit.

Its function is as follows. Binds directly to 23S rRNA. The L1 stalk is quite mobile in the ribosome, and is involved in E site tRNA release. In terms of biological role, protein L1 is also a translational repressor protein, it controls the translation of the L11 operon by binding to its mRNA. This Syntrophotalea carbinolica (strain DSM 2380 / NBRC 103641 / GraBd1) (Pelobacter carbinolicus) protein is Large ribosomal subunit protein uL1.